A 354-amino-acid chain; its full sequence is MAAECGSGNCDAWAARDPSGILSPYKFNRRAVQSDDVSLRITHCGVCYADVAWTRNILNNSMYPLVPGHEIAGVVTEVGADVKSFKVGDHVGVGTYVNSCRDCENCNSSLENYCSQHVFTFNGVDTDGTVTKGGYSTHIVVHERYCFKIPDGYPLEKAAPLLCAGITVYSPMMRHNMNQPGKSLGVIGLGGLGHMAVKFGKAFGLKVTVISTSESKRKEAIDLLGADNFVVSSDENQMETLKSSLNFIIDTASGDHPFDPYLTLLKVGGVMALLSFPSEIKVHPANLNLGGRSLSGSVTGGTKDIQEMINFCAANKIYPDIEMIKIDYINEALQRLVDRDVRFRFVIDIENSFK.

Cys-47, His-69, Glu-70, Cys-100, Cys-103, Cys-106, Cys-114, and Cys-163 together coordinate Zn(2+). Residues Thr-167, 188–193, 211–216, Thr-251, and 297–299 each bind NADP(+); these read GLGGLG, STSESK, and SVT.

The protein belongs to the zinc-containing alcohol dehydrogenase family. As to quaternary structure, homodimer. It depends on Zn(2+) as a cofactor.

It catalyses the reaction (E)-cinnamyl alcohol + NADP(+) = (E)-cinnamaldehyde + NADPH + H(+). The enzyme catalyses (E)-coniferol + NADP(+) = (E)-coniferaldehyde + NADPH + H(+). The catalysed reaction is (E)-sinapyl alcohol + NADP(+) = (E)-sinapaldehyde + NADPH + H(+). It carries out the reaction (E)-4-coumaroyl alcohol + NADP(+) = (E)-4-coumaraldehyde + NADPH + H(+). It catalyses the reaction (E)-caffeyl alcohol + NADP(+) = (E)-caffeyl aldehyde + NADPH + H(+). It functions in the pathway aromatic compound metabolism; phenylpropanoid biosynthesis. Involved in lignin biosynthesis. Catalyzes the final step specific for the production of lignin monomers. Catalyzes the NADPH-dependent reduction of coniferaldehyde, 5-hydroxyconiferaldehyde, sinapaldehyde, 4-coumaraldehyde and caffeyl aldehyde to their respective alcohols. The protein is Probable cinnamyl alcohol dehydrogenase 1 of Oryza sativa subsp. japonica (Rice).